Consider the following 310-residue polypeptide: Phosphoribosylaminoimidazole-succinocarboxamide synthase (310 aa).

Belongs to the SAICAR synthetase family.

The enzyme catalyses 5-amino-1-(5-phospho-D-ribosyl)imidazole-4-carboxylate + L-aspartate + ATP = (2S)-2-[5-amino-1-(5-phospho-beta-D-ribosyl)imidazole-4-carboxamido]succinate + ADP + phosphate + 2 H(+). The protein operates within purine metabolism; IMP biosynthesis via de novo pathway; 5-amino-1-(5-phospho-D-ribosyl)imidazole-4-carboxamide from 5-amino-1-(5-phospho-D-ribosyl)imidazole-4-carboxylate: step 1/2. The chain is Phosphoribosylaminoimidazole-succinocarboxamide synthase from Cytophaga hutchinsonii (strain ATCC 33406 / DSM 1761 / CIP 103989 / NBRC 15051 / NCIMB 9469 / D465).